Consider the following 469-residue polypeptide: RuvB-like helicase 2 (469 aa).

76–83 (GPPSTGKT) serves as a coordination point for ATP.

The protein belongs to the RuvB family. As to quaternary structure, may form heterododecamers with RVB1. Component of the SWR1 chromatin remodeling complex, the INO80 chromatin remodeling complex, and of the R2TP complex.

It is found in the nucleus. It catalyses the reaction ATP + H2O = ADP + phosphate + H(+). In terms of biological role, DNA helicase which participates in several chromatin remodeling complexes, including the SWR1 and the INO80 complexes. The SWR1 complex mediates the ATP-dependent exchange of histone H2A for the H2A variant HZT1 leading to transcriptional regulation of selected genes by chromatin remodeling. The INO80 complex remodels chromatin by shifting nucleosomes and is involved in DNA repair. Also involved in pre-rRNA processing. The chain is RuvB-like helicase 2 (rvb2) from Aspergillus fumigatus (strain ATCC MYA-4609 / CBS 101355 / FGSC A1100 / Af293) (Neosartorya fumigata).